A 390-amino-acid polypeptide reads, in one-letter code: Probable tRNA pseudouridine synthase D (390 aa).

D93 serves as the catalytic Nucleophile. The TRUD domain occupies 166–353 (YVLNYYGIQR…YGTRRKMITP (188 aa)).

The protein belongs to the pseudouridine synthase TruD family.

It carries out the reaction uridine(13) in tRNA = pseudouridine(13) in tRNA. Its function is as follows. Could be responsible for synthesis of pseudouridine from uracil-13 in transfer RNAs. The chain is Probable tRNA pseudouridine synthase D from Methanococcus maripaludis (strain C5 / ATCC BAA-1333).